The primary structure comprises 502 residues: tRNA-specific adenosine deaminase 1 (502 aa).

The region spanning 63–501 is the A to I editase domain; it reads SMGTGTKCIG…IRNPPDYHQF (439 aa). Residue His87 coordinates Zn(2+). Glu89 serves as the catalytic Proton donor. 1D-myo-inositol hexakisphosphate is bound by residues Arg93 and Arg94. Cys142 is a Zn(2+) binding site. Ser191 carries the phosphoserine modification. Position 299 (Cys299) interacts with Zn(2+). 1D-myo-inositol hexakisphosphate contacts are provided by Lys302, Arg305, Lys435, and Lys470.

It belongs to the ADAT1 family. Requires 1D-myo-inositol hexakisphosphate as cofactor.

It carries out the reaction adenosine(37) in tRNA(Ala) + H2O + H(+) = inosine(37) in tRNA(Ala) + NH4(+). In terms of biological role, specifically deaminates adenosine-37 to inosine in tRNA-Ala. This chain is tRNA-specific adenosine deaminase 1 (ADAT1), found in Macaca fascicularis (Crab-eating macaque).